Consider the following 406-residue polypeptide: Putative phosphate permease TK2061 (406 aa).

A run of 10 helical transmembrane segments spans residues 2 to 22 (AVMDPWLLITIIVGFGMAWAI), 45 to 65 (AVLIAGVLEFTGAYFFGKSVT), 82 to 102 (TVLIYGSVAALLAATIWLVIA), 115 to 135 (IIGGIVGYGIVYAGFSIVNWG), 139 to 159 (QVVLSWILSPIIGAIMAFLVF), 182 to 202 (FWIGLAFVVIGTMFYIKVLHG), 208 to 228 (GVLFYGIPAGLVVFLILFLTL), 288 to 308 (VPVPRWILAMGGLGIAIGVAT), 324 to 346 (LTNTRGFTIDFSAATVVLVASWL), and 385 to 405 (FVTVPVAALISAFLFKILMIV).

The protein belongs to the inorganic phosphate transporter (PiT) (TC 2.A.20) family.

The protein resides in the cell membrane. Its function is as follows. Potential transporter for phosphate. The protein is Putative phosphate permease TK2061 of Thermococcus kodakarensis (strain ATCC BAA-918 / JCM 12380 / KOD1) (Pyrococcus kodakaraensis (strain KOD1)).